The following is a 1093-amino-acid chain: Probable phosphorylase b kinase regulatory subunit beta (1093 aa).

A disordered region spans residues 1-27; the sequence is MRDVPKSLGLSVTTPGGSSGAPDSGRH. Calmodulin-binding stretches follow at residues 6–27, 751–778, and 905–936; these read KSLG…SGRH, QLYH…IVDS, and EKLT…ILQR. Cys-1090 is lipidated: S-farnesyl cysteine.

The protein belongs to the phosphorylase b kinase regulatory chain family. Although the final Cys may be farnesylated, the terminal tripeptide is probably not removed, and the C-terminus is not methylated.

The protein localises to the cell membrane. Its pathway is glycan biosynthesis; glycogen metabolism. Functionally, phosphorylase b kinase catalyzes the phosphorylation of serine in certain substrates, including troponin I. The beta chain acts as a regulatory unit and modulates the activity of the holoenzyme in response to phosphorylation. The sequence is that of Probable phosphorylase b kinase regulatory subunit beta from Drosophila melanogaster (Fruit fly).